The following is a 188-amino-acid chain: Elongation factor P (188 aa).

Belongs to the elongation factor P family.

Its subcellular location is the cytoplasm. Its pathway is protein biosynthesis; polypeptide chain elongation. Functionally, involved in peptide bond synthesis. Stimulates efficient translation and peptide-bond synthesis on native or reconstituted 70S ribosomes in vitro. Probably functions indirectly by altering the affinity of the ribosome for aminoacyl-tRNA, thus increasing their reactivity as acceptors for peptidyl transferase. This chain is Elongation factor P, found in Phytoplasma mali (strain AT).